The chain runs to 53 residues: uncharacterized protein (53 aa).

2 helical membrane passes run 3 to 22 (LFGM…GVLL) and 26 to 45 (AFFF…FTVL).

It is found in the cell membrane. This is an uncharacterized protein from Bacillus subtilis (strain 168).